We begin with the raw amino-acid sequence, 95 residues long: uncharacterized protein (95 aa).

In terms of biological role, the presence of the two linear plasmids, termed pGKL1 and pGKL2, in strains of Kluyveromyces lactis confers the killer phenotype to the host cell, by promoting the secretion of a toxin able to inhibit the growth of sensitive strains. This is an uncharacterized protein from Kluyveromyces lactis (strain ATCC 8585 / CBS 2359 / DSM 70799 / NBRC 1267 / NRRL Y-1140 / WM37) (Yeast).